The sequence spans 159 residues: Putative 4-hydroxy-4-methyl-2-oxoglutarate aldolase (159 aa).

Substrate is bound by residues 74-77 and Arg96; that span reads GDNL. Asp97 lines the a divalent metal cation pocket.

The protein belongs to the class II aldolase/RraA-like family. In terms of assembly, homotrimer. A divalent metal cation is required as a cofactor.

It carries out the reaction 4-hydroxy-4-methyl-2-oxoglutarate = 2 pyruvate. It catalyses the reaction oxaloacetate + H(+) = pyruvate + CO2. Functionally, catalyzes the aldol cleavage of 4-hydroxy-4-methyl-2-oxoglutarate (HMG) into 2 molecules of pyruvate. Also contains a secondary oxaloacetate (OAA) decarboxylase activity due to the common pyruvate enolate transition state formed following C-C bond cleavage in the retro-aldol and decarboxylation reactions. The sequence is that of Putative 4-hydroxy-4-methyl-2-oxoglutarate aldolase from Bacillus cereus (strain ZK / E33L).